A 311-amino-acid chain; its full sequence is uncharacterized protein (311 aa).

The next 10 membrane-spanning stretches (helical) occupy residues 6-26, 33-53, 70-90, 97-117, 123-143, 155-175, 185-205, 219-239, 244-264, and 265-285; these read IFIL…KMLA, PFQV…PMAV, YLAL…QFAV, TAAV…YFIL, GITI…FNPA, LIGI…TVIS, YVFN…LLVV, ILVL…CYLG, TSAV…TVLA, and ILIL…FIII. EamA domains are found at residues 12–141 and 166–292; these read AIFY…IIFN and VVWS…INYS.

It belongs to the EamA transporter family.

It localises to the cell membrane. This is an uncharacterized protein from Clostridium kluyveri (strain ATCC 8527 / DSM 555 / NBRC 12016 / NCIMB 10680 / K1).